The primary structure comprises 141 residues: Large ribosomal subunit protein uL11 (141 aa).

Belongs to the universal ribosomal protein uL11 family. In terms of assembly, part of the ribosomal stalk of the 50S ribosomal subunit. Interacts with L10 and the large rRNA to form the base of the stalk. L10 forms an elongated spine to which L12 dimers bind in a sequential fashion forming a multimeric L10(L12)X complex. One or more lysine residues are methylated.

In terms of biological role, forms part of the ribosomal stalk which helps the ribosome interact with GTP-bound translation factors. This is Large ribosomal subunit protein uL11 from Synechococcus elongatus (strain ATCC 33912 / PCC 7942 / FACHB-805) (Anacystis nidulans R2).